A 944-amino-acid polypeptide reads, in one-letter code: Valine--tRNA ligase (944 aa).

Positions 43-53 match the 'HIGH' region motif; that stretch reads PNVTGTLHMGH. Residues 550–554 carry the 'KMSKS' region motif; that stretch reads KMSKS. An ATP-binding site is contributed by Lys553. A coiled-coil region spans residues 878-944; sequence LVDMDAERTR…TGLREQRAKL (67 aa).

It belongs to the class-I aminoacyl-tRNA synthetase family. ValS type 1 subfamily. Monomer.

The protein localises to the cytoplasm. It catalyses the reaction tRNA(Val) + L-valine + ATP = L-valyl-tRNA(Val) + AMP + diphosphate. In terms of biological role, catalyzes the attachment of valine to tRNA(Val). As ValRS can inadvertently accommodate and process structurally similar amino acids such as threonine, to avoid such errors, it has a 'posttransfer' editing activity that hydrolyzes mischarged Thr-tRNA(Val) in a tRNA-dependent manner. The chain is Valine--tRNA ligase from Xanthomonas campestris pv. campestris (strain 8004).